We begin with the raw amino-acid sequence, 51 residues long: Sperm protamine P1 (51 aa).

The protein belongs to the protamine P1 family. Testis.

Its subcellular location is the nucleus. The protein localises to the chromosome. Functionally, protamines substitute for histones in the chromatin of sperm during the haploid phase of spermatogenesis. They compact sperm DNA into a highly condensed, stable and inactive complex. This is Sperm protamine P1 (PRM1) from Trachypithecus johnii (Nilgiri langur).